Consider the following 420-residue polypeptide: Phosphoglycerate kinase (420 aa).

Positions 24, 25, 26, 27, 40, 63, 64, 66, 67, 122, 123, 170, and 171 each coordinate (2R)-3-phosphoglycerate. Glycine 214 serves as a coordination point for ADP. Glycine 214 provides a ligand contact to CDP. Positions 215 and 216 each coordinate AMP. Alanine 215 is an ATP binding site. Alanine 215 is a binding site for Mg(2+). CDP is bound at residue aspartate 219. Aspartate 219 contacts Mg(2+). Lysine 220 serves as a coordination point for AMP. Lysine 220 provides a ligand contact to ATP. Glycine 238 contributes to the ADP binding site. Position 238 (glycine 238) interacts with CDP. AMP-binding residues include glycine 239 and glycine 313. Positions 239 and 313 each coordinate ATP. 2 residues coordinate CDP: glycine 338 and phenylalanine 343. Phenylalanine 343 contributes to the ADP binding site. Residue glutamate 344 participates in AMP binding. ATP is bound by residues glutamate 344, aspartate 375, and threonine 376. A Mg(2+)-binding site is contributed by aspartate 375.

The protein belongs to the phosphoglycerate kinase family. In terms of assembly, monomer. It depends on Mg(2+) as a cofactor.

It catalyses the reaction (2R)-3-phosphoglycerate + ATP = (2R)-3-phospho-glyceroyl phosphate + ADP. The protein operates within carbohydrate degradation; glycolysis; pyruvate from D-glyceraldehyde 3-phosphate: step 2/5. In Tetrahymena thermophila, this protein is Phosphoglycerate kinase (PGK).